A 512-amino-acid polypeptide reads, in one-letter code: Histidine ammonia-lyase (512 aa).

A cross-link (5-imidazolinone (Ala-Gly)) is located at residues alanine 144–glycine 146. Serine 145 carries the 2,3-didehydroalanine (Ser) modification.

It belongs to the PAL/histidase family. In terms of processing, contains an active site 4-methylidene-imidazol-5-one (MIO), which is formed autocatalytically by cyclization and dehydration of residues Ala-Ser-Gly.

The protein resides in the cytoplasm. It carries out the reaction L-histidine = trans-urocanate + NH4(+). It functions in the pathway amino-acid degradation; L-histidine degradation into L-glutamate; N-formimidoyl-L-glutamate from L-histidine: step 1/3. The polypeptide is Histidine ammonia-lyase (Desulfotalea psychrophila (strain LSv54 / DSM 12343)).